The following is a 313-amino-acid chain: tRNA dimethylallyltransferase (313 aa).

8–15 (GPTGTGKS) is a binding site for ATP. Residue 10–15 (TGTGKS) coordinates substrate.

Belongs to the IPP transferase family. In terms of assembly, monomer. It depends on Mg(2+) as a cofactor.

The enzyme catalyses adenosine(37) in tRNA + dimethylallyl diphosphate = N(6)-dimethylallyladenosine(37) in tRNA + diphosphate. Catalyzes the transfer of a dimethylallyl group onto the adenine at position 37 in tRNAs that read codons beginning with uridine, leading to the formation of N6-(dimethylallyl)adenosine (i(6)A). This chain is tRNA dimethylallyltransferase, found in Mycolicibacterium gilvum (strain PYR-GCK) (Mycobacterium gilvum (strain PYR-GCK)).